We begin with the raw amino-acid sequence, 335 residues long: Galactosylgalactosylxylosylprotein 3-beta-glucuronosyltransferase 3 (335 aa).

Topologically, residues 1–7 (MKLKLKN) are cytoplasmic. A helical; Signal-anchor for type II membrane protein membrane pass occupies residues 8–28 (VFLAYFLVSIAGLLYALVQLG). The Lumenal segment spans residues 29 to 335 (QPCDCLPPLR…GQGSDPAIEV (307 aa)). UDP-alpha-D-glucuronate-binding positions include 82–84 (PTY), D113, R156, R161, and 194–196 (DDD). D196 lines the Mn(2+) pocket. The interaction with galactose moiety of substrate glycoprotein stretch occupies residues 243 to 252 (WEPNRPFPLD). Catalysis depends on E281, which acts as the Proton donor/acceptor. N300 carries an N-linked (GlcNAc...) asparagine glycan. 308 to 310 (HTR) provides a ligand contact to UDP-alpha-D-glucuronate. The segment covering 312–322 (EKPKMKQEEQL) has biased composition (basic and acidic residues). Positions 312–335 (EKPKMKQEEQLQRQGQGSDPAIEV) are disordered.

This sequence belongs to the glycosyltransferase 43 family. Homodimer; disulfide-linked. Interacts with PXYLP1; the interaction increases the 2-phosphoxylose phosphatase activity of PXYLP1 during completion of linkage region formation in a B3GAT3-mediated manner. Mn(2+) serves as cofactor. Post-translationally, N-glycosylated. As to expression, expressed in heart, aorta, bone, and also in osteoblasts.

It localises to the golgi apparatus membrane. The protein localises to the golgi apparatus. It is found in the cis-Golgi network. The enzyme catalyses 3-O-(beta-D-galactosyl-(1-&gt;3)-beta-D-galactosyl-(1-&gt;4)-beta-D-xylosyl)-L-seryl-[protein] + UDP-alpha-D-glucuronate = 3-O-(beta-D-GlcA-(1-&gt;3)-beta-D-Gal-(1-&gt;3)-beta-D-Gal-(1-&gt;4)-beta-D-Xyl)-L-seryl-[protein] + UDP + H(+). The protein operates within protein modification; protein glycosylation. Functionally, glycosaminoglycans biosynthesis. Involved in forming the linkage tetrasaccharide present in heparan sulfate and chondroitin sulfate. Transfers a glucuronic acid moiety from the uridine diphosphate-glucuronic acid (UDP-GlcUA) to the common linkage region trisaccharide Gal-beta-1,3-Gal-beta-1,4-Xyl covalently bound to a Ser residue at the glycosaminylglycan attachment site of proteoglycans. Can also play a role in the biosynthesis of l2/HNK-1 carbohydrate epitope on glycoproteins. Stimulates 2-phosphoxylose phosphatase activity of PXYLP1 in presence of uridine diphosphate-glucuronic acid (UDP-GlcUA) during completion of linkage region formation. The sequence is that of Galactosylgalactosylxylosylprotein 3-beta-glucuronosyltransferase 3 (B3gat3) from Mus musculus (Mouse).